The chain runs to 677 residues: Fidgetin-like protein 1 (677 aa).

Polar residues predominate over residues 203 to 216 (TSSAPSGESTTATF). 3 disordered regions span residues 203-232 (TSSA…PQSF), 249-324 (VPSG…SFNG), and 337-378 (GIFG…TDDR). A Glycyl lysine isopeptide (Lys-Gly) (interchain with G-Cter in SUMO2) cross-link involves residue Lys226. Positions 264 to 280 (DSDTINMLSNPTLNKAP) are enriched in polar residues. The span at 281-292 (SKTEDSGQREDN) shows a compositional bias: basic and acidic residues. An N6-acetyllysine modification is found at Lys341. The span at 347–358 (SNKQDGSEQNGN) shows a compositional bias: polar residues. ATP is bound by residues Ala407 and 447–452 (GTGKTL).

Belongs to the AAA ATPase family. In terms of assembly, hexamer. Interacts (via N-terminal one-half region) with RAD51; the interaction is direct. Interacts (via N-terminal one-half region) with SPIDR (via the C-terminal region); the interaction is direct. Interacts with FIRRM; may regulate homologous recombination. Requires Mg(2+) as cofactor.

The protein resides in the nucleus. It localises to the cytoplasm. It is found in the perinuclear region. The enzyme catalyses ATP + H2O = ADP + phosphate + H(+). Functionally, involved in DNA double-strand break (DBS) repair via homologous recombination (HR). Recruited at DSB sites independently of BRCA2, RAD51 and RAD51 paralogs in a H2AX-dependent manner. May regulate osteoblast proliferation and differentiation. May play a role in the control of male meiosis dynamic. In Rattus norvegicus (Rat), this protein is Fidgetin-like protein 1 (Fignl1).